Reading from the N-terminus, the 337-residue chain is Glutaminase-asparaginase (337 aa).

In terms of domain architecture, Asparaginase/glutaminase spans 10 to 337; sequence ANVVILATGG…KELQRIFWEY (328 aa). T20 serves as the catalytic Acyl-ester intermediate. Substrate-binding positions include S67 and 100–101; that span reads TD.

It belongs to the asparaginase 1 family. Homotetramer.

It localises to the periplasm. It catalyses the reaction L-glutamine + H2O = L-glutamate + NH4(+). The catalysed reaction is L-asparagine + H2O = L-aspartate + NH4(+). The protein is Glutaminase-asparaginase (ansB) of Pseudomonas sp. (strain ATCC 29598 / 7A).